A 678-amino-acid chain; its full sequence is Alpha-L-arabinofuranosidase 1 (678 aa).

Residues 1–33 form the signal peptide; that stretch reads MDMESWKLLRSVCVLSFLLGSCFVYQSLRVVDA. One can recognise a CBM-cenC domain in the interval 152 to 239; it reads NIEEGKKYKV…WIDQVSAMPV (88 aa). N-linked (GlcNAc...) asparagine glycans are attached at residues Asn-181, Asn-362, Asn-523, and Asn-555.

The protein belongs to the glycosyl hydrolase 51 family. As to expression, expressed in roots, leaves, flowers, stems, siliques and seedlings. Observed in zones of cell proliferation, the vascular system and floral abscission zones. Expressed in the guard cells in stems, in xylem vessels and parenchyma cells surrounding the vessels, in the cambium and in the phloem, but not in the secondary xylem.

The protein resides in the secreted. It localises to the extracellular space. The protein localises to the extracellular matrix. The enzyme catalyses Hydrolysis of terminal non-reducing alpha-L-arabinofuranoside residues in alpha-L-arabinosides.. Its function is as follows. May be involved in the coordinated dissolution of the cell wall matrix during abscission and in the secondary cell wall formation in xylem vessels. Prefers arabinoxylan, but may also use pectic arabinans as substrates. The protein is Alpha-L-arabinofuranosidase 1 (ASD1) of Arabidopsis thaliana (Mouse-ear cress).